Reading from the N-terminus, the 1637-residue chain is Glutamate rich 3 (1637 aa).

Disordered regions lie at residues 145 to 192 (PLTL…GSLL), 408 to 453 (PSST…KESC), 478 to 814 (EWKG…QDAG), 1111 to 1194 (VGTS…SPRE), 1238 to 1445 (IEKV…SGER), and 1457 to 1637 (KAEN…RETA). Polar residues predominate over residues 169–185 (LLSSRQTRNGSKITSGS). Basic and acidic residues-rich tracts occupy residues 416-426 (EKITEKKEEPP), 443-452 (KRNEMERKES), and 478-487 (EWKGKSGRDV). The span at 500–523 (YEEDFEVDDEKQDEKVDEDEDQAD) shows a compositional bias: acidic residues. A compositionally biased stretch (basic and acidic residues) spans 534–557 (TESEKDNRNPEKKIETSSEKAHDS). Residues 558–572 (ENEDTGCSDSEEDDR) show a composition bias toward acidic residues. Low complexity-rich tracts occupy residues 579–590 (SSISSRSHPYSS) and 608–617 (EEGSSRSSSS). Composition is skewed to basic and acidic residues over residues 619 to 638 (DLRE…KYLE), 677 to 693 (ESEH…EVRA), 769 to 802 (QEMH…ESGM), 1115 to 1130 (EVKE…KTDG), 1264 to 1307 (LKTE…KDVE), 1319 to 1329 (KLLEDPPKERA), 1342 to 1357 (SPKE…KGGE), and 1402 to 1412 (RCEEWAAKELD). Positions 1476–1487 (VTGSLTGQNWNM) are enriched in polar residues. 3 stretches are compositionally biased toward basic and acidic residues: residues 1550 to 1568 (AEER…KVAV), 1589 to 1599 (AQDREGGETKA), and 1614 to 1637 (GKDE…RETA).

It is found in the cell projection. The protein resides in the cilium. The protein localises to the cytoplasm. Its function is as follows. Component of the primary cilium that controls cilium formation and length. May function within retrograde intraflagellar transport (IFT)-associated pathways to remove signaling proteins from primary cilia. Also involved in neuronal vesicle biogenesis and neurotransmitter vesicular function. This chain is Glutamate rich 3, found in Mus musculus (Mouse).